We begin with the raw amino-acid sequence, 408 residues long: UPF0761 membrane protein NMC0462 (408 aa).

The next 6 membrane-spanning stretches (helical) occupy residues 43-63, 100-120, 139-159, 176-196, 210-230, and 248-268; these read LLAL…FPVF, LTAI…RTID, FLVY…GISF, WSGA…LWGL, AFVG…LFTW, and VPFF…GAVL.

This sequence belongs to the UPF0761 family.

The protein resides in the cell inner membrane. This is UPF0761 membrane protein NMC0462 from Neisseria meningitidis serogroup C / serotype 2a (strain ATCC 700532 / DSM 15464 / FAM18).